The primary structure comprises 461 residues: Protein naked cuticle homolog 2 (461 aa).

The segment at 1 to 106 (MGKFQSKHAA…DGEKAASREG (106 aa)) is disordered. Residue Gly2 is the site of N-myristoyl glycine attachment. Composition is skewed to basic and acidic residues over residues 34-73 (RGAE…DKGS) and 97-106 (DGEKAASREG). The interval 121 to 186 (QCDVSVEEDN…LRVKLTVSPE (66 aa)) is interaction with DVL1, DVL2 and DVL3. Positions 127-162 (EEDNRQEWTFTLYDFDNSGKVTREDMSSLMHTIYEV) constitute an EF-hand domain. Ca(2+) contacts are provided by Asp140, Asp142, Ser144, Lys146, and Asp151. 5 disordered regions span residues 176 to 205 (TLRV…PTRG), 263 to 302 (YTSK…HAIH), 321 to 359 (TRAL…PGKA), 372 to 414 (SAQD…GQPT), and 441 to 461 (HEHH…FHPS). Basic and acidic residues predominate over residues 188–205 (SSKKECPLTGQDREPTRG). Residues 307 to 396 (QVLAEHVIPA…PPQPYGHKRY (90 aa)) form an interaction with TGFA region. The span at 341 to 350 (PKGPGKPLGT) shows a compositional bias: low complexity. Pro residues predominate over residues 380–390 (PQPPPQPPPQP).

This sequence belongs to the NKD family. Interacts with RNF25, TGFA (via cytoplasmic domain), and PPP2R3A. Interacts with DVL1, DVL2 and DVL3. In terms of processing, ubiquitinated, leading to rapid proteasomal degradation. Interaction with TGFA interferes with RNF25 binding and protects against ubiquitination mediated by RNF25. In terms of tissue distribution, expressed in the cecum, colon, esophagus, ileum, jejunum, skin and stomach.

It localises to the cell membrane. The protein localises to the cytoplasm. The protein resides in the cytoplasmic vesicle. Its function is as follows. Cell autonomous antagonist of the canonical Wnt signaling pathway. May activate a second Wnt signaling pathway that controls planar cell polarity. Required for processing of TGFA and for targeting of TGFA to the basolateral membrane of polarized epithelial cells. This is Protein naked cuticle homolog 2 (Nkd2) from Mus musculus (Mouse).